Reading from the N-terminus, the 78-residue chain is DNA-directed RNA polymerase subunit omega (78 aa).

It belongs to the RNA polymerase subunit omega family. In cyanobacteria the RNAP catalytic core is composed of 2 alpha, 1 beta, 1 beta', 1 gamma and 1 omega subunit. When a sigma factor is associated with the core the holoenzyme is formed, which can initiate transcription.

It carries out the reaction RNA(n) + a ribonucleoside 5'-triphosphate = RNA(n+1) + diphosphate. Functionally, promotes RNA polymerase assembly. Latches the N- and C-terminal regions of the beta' subunit thereby facilitating its interaction with the beta and alpha subunits. The sequence is that of DNA-directed RNA polymerase subunit omega from Prochlorococcus marinus (strain AS9601).